A 476-amino-acid chain; its full sequence is Probable cytosolic Fe-S cluster assembly factor GH10760 (476 aa).

Residues C23, C68, C71, C74, C187, C243, C395, and C399 each contribute to the [4Fe-4S] cluster site.

Belongs to the NARF family.

Component of the cytosolic iron-sulfur (Fe/S) protein assembly machinery. Required for maturation of extramitochondrial Fe/S proteins. This chain is Probable cytosolic Fe-S cluster assembly factor GH10760, found in Drosophila grimshawi (Hawaiian fruit fly).